The sequence spans 431 residues: Histidinol dehydrogenase 1 (431 aa).

Residues Tyr-127, Gln-188, and Asn-211 each contribute to the NAD(+) site. The substrate site is built by Ser-234, Gln-256, and His-259. Residues Gln-256 and His-259 each contribute to the Zn(2+) site. Catalysis depends on proton acceptor residues Glu-324 and His-325. Residues His-325, Asp-358, Glu-412, and His-417 each coordinate substrate. Asp-358 is a binding site for Zn(2+). Zn(2+) is bound at residue His-417.

Belongs to the histidinol dehydrogenase family. The cofactor is Zn(2+).

It catalyses the reaction L-histidinol + 2 NAD(+) + H2O = L-histidine + 2 NADH + 3 H(+). It participates in amino-acid biosynthesis; L-histidine biosynthesis; L-histidine from 5-phospho-alpha-D-ribose 1-diphosphate: step 9/9. Its function is as follows. Catalyzes the sequential NAD-dependent oxidations of L-histidinol to L-histidinaldehyde and then to L-histidine. This chain is Histidinol dehydrogenase 1 (hisD1), found in Nostoc sp. (strain PCC 7120 / SAG 25.82 / UTEX 2576).